The chain runs to 550 residues: Cytochrome P450 monooxygenase FFUJ_09176 (550 aa).

An N-terminal signal peptide occupies residues 1–31 (MLQTIPMPSRELTIALAVLSLLMVLVQRAGS). Positions 430 to 441 (FIPERFEGDTRS) are enriched in basic and acidic residues. The disordered stretch occupies residues 430 to 451 (FIPERFEGDTRSSQESAASPDV). Heme is bound at residue C466.

This sequence belongs to the cytochrome P450 family.

Cytochrome P450 monooxygenase; part of the DMATS1 gene cluster that mediates the biosynthesis of a reversely N-prenylated monomeric L-tryptophan (r-N-DMAT). Seems not to contribute to the final DMATS1 product. This chain is Cytochrome P450 monooxygenase FFUJ_09176, found in Gibberella fujikuroi (strain CBS 195.34 / IMI 58289 / NRRL A-6831) (Bakanae and foot rot disease fungus).